Here is a 282-residue protein sequence, read N- to C-terminus: METISNPQELQNLCLMLRAEGKKIGLVPTMGYFHEGHLSLMDAARKQCDVLIVSLFVNPTQFGENEDLDAYPHNLERDSELAEKRGVDILFTPIRDDMYFEDHSTWVEVPDLATNLCGKSRPIHFRGVATVVTKLFMTAQPHVAVFGQKDWQQLAIIKRMVRDLNIPVDVQGHEIVREESGLALSSRNVYLTEDEKSVAPNIQKGLQKMRDWVTAGESDAAKLKSDLVEFYAETIPTGRVDYIEIVHPENINILKNVGDSALCAVAIQLGNARLIDNLLIKV.

30-37 is an ATP binding site; that stretch reads MGYFHEGH. The active-site Proton donor is H37. Q61 provides a ligand contact to (R)-pantoate. Q61 provides a ligand contact to beta-alanine. 147–150 contributes to the ATP binding site; that stretch reads GQKD. Q153 is a binding site for (R)-pantoate. ATP-binding positions include V176 and 184-187; that span reads LSSR.

It belongs to the pantothenate synthetase family. Homodimer.

It localises to the cytoplasm. It carries out the reaction (R)-pantoate + beta-alanine + ATP = (R)-pantothenate + AMP + diphosphate + H(+). Its pathway is cofactor biosynthesis; (R)-pantothenate biosynthesis; (R)-pantothenate from (R)-pantoate and beta-alanine: step 1/1. Its function is as follows. Catalyzes the condensation of pantoate with beta-alanine in an ATP-dependent reaction via a pantoyl-adenylate intermediate. The polypeptide is Pantothenate synthetase (Maridesulfovibrio salexigens (strain ATCC 14822 / DSM 2638 / NCIMB 8403 / VKM B-1763) (Desulfovibrio salexigens)).